A 124-amino-acid chain; its full sequence is Ribonuclease VapC32 (124 aa).

A PINc domain is found at 2–112 (ILVDTSVWIE…TRDKRLKAAC (111 aa)). Mg(2+) is bound by residues Asp-5 and Asp-86.

The protein belongs to the PINc/VapC protein family. Requires Mg(2+) as cofactor.

Its function is as follows. Toxic component of a type II toxin-antitoxin (TA) system. An RNase. Its toxic effect is neutralized by coexpression with cognate antitoxin VapB32. The sequence is that of Ribonuclease VapC32 from Mycobacterium tuberculosis (strain CDC 1551 / Oshkosh).